We begin with the raw amino-acid sequence, 371 residues long: tRNA-specific 2-thiouridylase MnmA (371 aa).

Residues 14 to 21 (GMSGGVDS) and M40 each bind ATP. The interval 100 to 102 (NPD) is interaction with target base in tRNA. C105 (nucleophile) is an active-site residue. C105 and C201 are oxidised to a cystine. G129 is a binding site for ATP. The tract at residues 151–153 (KDQ) is interaction with tRNA. The active-site Cysteine persulfide intermediate is the C201. Residues 309–310 (RY) form an interaction with tRNA region.

It belongs to the MnmA/TRMU family.

It localises to the cytoplasm. The catalysed reaction is S-sulfanyl-L-cysteinyl-[protein] + uridine(34) in tRNA + AH2 + ATP = 2-thiouridine(34) in tRNA + L-cysteinyl-[protein] + A + AMP + diphosphate + H(+). Its function is as follows. Catalyzes the 2-thiolation of uridine at the wobble position (U34) of tRNA, leading to the formation of s(2)U34. In Halalkalibacterium halodurans (strain ATCC BAA-125 / DSM 18197 / FERM 7344 / JCM 9153 / C-125) (Bacillus halodurans), this protein is tRNA-specific 2-thiouridylase MnmA.